We begin with the raw amino-acid sequence, 56 residues long: Large ribosomal subunit protein bL33 (56 aa).

The protein belongs to the bacterial ribosomal protein bL33 family.

The protein is Large ribosomal subunit protein bL33 of Campylobacter hominis (strain ATCC BAA-381 / DSM 21671 / CCUG 45161 / LMG 19568 / NCTC 13146 / CH001A).